Consider the following 122-residue polypeptide: MDKQSLHETAKRLALELPFVELCWPFGPEFDVFKIGGKIFMLSSELRGVPFINLKSDPQKSLLNQQIYPSIKPGYHMNKKHWISVYPGEEISEALLRDLINDSWNLVVDGLAKRDQKRVRPG.

This is an uncharacterized protein from Escherichia coli O157:H7.